A 498-amino-acid polypeptide reads, in one-letter code: ATP synthase subunit beta, chloroplastic (498 aa).

ATP is bound at residue 172–179 (GGAGVGKT).

It belongs to the ATPase alpha/beta chains family. F-type ATPases have 2 components, CF(1) - the catalytic core - and CF(0) - the membrane proton channel. CF(1) has five subunits: alpha(3), beta(3), gamma(1), delta(1), epsilon(1). CF(0) has four main subunits: a(1), b(1), b'(1) and c(9-12).

It localises to the plastid. It is found in the chloroplast thylakoid membrane. The catalysed reaction is ATP + H2O + 4 H(+)(in) = ADP + phosphate + 5 H(+)(out). Produces ATP from ADP in the presence of a proton gradient across the membrane. The catalytic sites are hosted primarily by the beta subunits. The protein is ATP synthase subunit beta, chloroplastic of Phalaenopsis aphrodite subsp. formosana (Moth orchid).